Here is a 1069-residue protein sequence, read N- to C-terminus: RE1-silencing transcription factor (1069 aa).

The segment at 32–121 (DLHDLSKAEL…SLELSVVEPQ (90 aa)) is interaction with SIN3A. The interaction with SIN3B stretch occupies residues 43-57 (APQLIMLANVALTGE). The segment at 85-104 (SDSEGEGLEESAELKGDPSG) is disordered. The tract at residues 144–417 (PVAEDKCKNL…KSKHPTCPSK (274 aa)) is interaction with ZFP90. The C2H2-type 1 zinc finger occupies 158-180 (FRCKPCQYEAESEEQFVHHIRVH). The interval 200–211 (SGASPSEEGEFS) is required for binding to the neuron-restrictive silencer element. 7 C2H2-type zinc fingers span residues 215-237 (IRCD…LKHH), 247-269 (YKCI…LRNH), 275-297 (YTCS…VRTH), 303-325 (YKCE…MRTH), 331-354 (FKCD…RQVH), 360-382 (LNCP…VELH), and 388-411 (FNCP…KSKH). 2 disordered regions span residues 425–737 (KLKK…MELP) and 830–1022 (KASK…GKEG). Residues 451-482 (EQAKTKGVDASARRSERPVKGVGKDVPKEKKP) show a composition bias toward basic and acidic residues. Residues 484-493 (SNASVVQVTT) show a composition bias toward polar residues. 2 stretches are compositionally biased toward basic and acidic residues: residues 498–511 (SAVE…KHTD) and 554–576 (ESKP…KADK). The segment covering 584–600 (KGGKKTALKTKTAKKGS) has biased composition (basic residues). Polar residues predominate over residues 630 to 643 (AVVTPSGSTQTELS). Pro residues-rich tracts occupy residues 679-706 (PSPP…PCPM) and 713-734 (PSPP…PLPM). Basic and acidic residues-rich tracts occupy residues 851–860 (RREETPKDQE) and 876–886 (GGTEEAGESRA). Low complexity predominate over residues 894–904 (STSALSSEQSS). The span at 930–943 (TEQKTDRVPLKDSA) shows a compositional bias: basic and acidic residues. Serine 948 is modified (phosphoserine). A compositionally biased stretch (low complexity) spans 957–968 (EAAAPAVVASPP). The interaction with RCOR1 stretch occupies residues 981-1059 (EGIHSHDGSD…HLNRHLVNVY (79 aa)). The segment at 1032-1054 (FVCIFCDRSFRKEKDYSKHLNRH) adopts a C2H2-type 9 zinc-finger fold.

Isoform 1 and isoform 6 form heterodimers. Isoform 6: Forms homodimers and homooligomers; binds to the neuron-restrictive silencer element (NRSE) as monomer. Interacts with SIN3A, SIN3B and RCOR1. Interacts with CDYL. Interacts with EHMT1 and EHMT2 only in the presence of CDYL. Part of a complex containing at least CDYL, REST, WIZ, SETB1, EHMT1 and EHMT2. Interacts (via zinc-finger DNA-binding domain) with ZFP90 (via N- and C-termini); the interaction inhibits REST repressor activity. Interacts (via C2H2-type zinc finger 5) with PRICKLE1. Interacts with FBXW11 and BTRC. Interacts with USP7. In terms of processing, O-glycosylated. Post-translationally, phosphorylated; phosphorylation is required for ubiquitination. Ubiquitinated; ubiquitination is mediated by BTRC and leads to proteasomal degradation in G2 phase. Ubiquitination increases during neuronal differentiation. Deubiquitinated by USP7; leading to its stabilization and promoting the maintenance of neural progenitor cells. As to expression, expressed in the hippocampus including the granule cell layer of the dentate gyrus, the pyramidal cell layers of CA1 and CA3, the apical and basilar dendrite layers of the stratum radiatum and stratum oriens of CA1, the stratum lucidum and stratum oriens of CA3 and in astroglia (at protein level). Expressed in the brain, with the highest levels in the neurons of hippocampus, pons/medulla and midbrain.

The protein resides in the nucleus. The protein localises to the cytoplasm. Transcriptional repressor which binds neuron-restrictive silencer element (NRSE) and represses neuronal gene transcription in non-neuronal cells. Restricts the expression of neuronal genes by associating with two distinct corepressors, SIN3A and RCOR1, which in turn recruit histone deacetylase to the promoters of REST-regulated genes. Mediates repression by recruiting the BHC complex at RE1/NRSE sites which acts by deacetylating and demethylating specific sites on histones, thereby acting as a chromatin modifier. Transcriptional repression by REST-CDYL via the recruitment of histone methyltransferase EHMT2 may be important in transformation suppression. Represses the expression of SRRM4 in non-neural cells to prevent the activation of neural-specific splicing events and to prevent production of REST isoform 6. Repressor activity may be inhibited by forming heterodimers with isoform 6, thereby preventing binding to NRSE or binding to corepressors and leading to derepression of target genes. Also maintains repression of neuronal genes in neural stem cells, and allows transcription and differentiation into neurons by dissociation from RE1/NRSE sites of target genes. Thereby is involved in maintaining the quiescent state of adult hippocampal neural stem cells and preventing premature differentiation into mature neurons. Plays a role in the developmental switch in synaptic NMDA receptor composition during postnatal development, by repressing GRIN2B expression and thereby altering NMDA receptor properties from containing primarily GRIN2B to primarily GRIN2A subunits. Acts as a regulator of osteoblast differentiation. Key repressor of gene expression in hypoxia; represses genes in hypoxia by direct binding to an RE1/NRSE site on their promoter regions. May also function in stress resistance in the brain during aging; possibly by regulating expression of genes involved in cell death and in the stress response. Repressor of gene expression in the hippocampus after ischemia by directly binding to RE1/NRSE sites and recruiting SIN3A and RCOR1 to promoters of target genes, thereby promoting changes in chromatin modifications and ischemia-induced cell death. After ischemia, might play a role in repression of miR-132 expression in hippocampal neurons, thereby leading to neuronal cell death. Functionally, binds to the 3' region of the neuron-restrictive silencer element (NRSE), with lower affinity than full-length REST isoform 1. Exhibits weaker repressor activity compared to isoform 1. May negatively regulate the repressor activity of isoform 1 by binding to isoform 1, thereby preventing its binding to NRSE and leading to derepression of target genes. However, in another study, does not appear to be implicated in repressor activity of a NRSE motif-containing reporter construct nor in inhibitory activity on the isoform 1 transcriptional repressor activity. Post-transcriptional inactivation of REST by SRRM4-dependent alternative splicing into isoform 6 is required in mechanosensory hair cells in the inner ear for derepression of neuronal genes and hearing. The protein is RE1-silencing transcription factor (Rest) of Rattus norvegicus (Rat).